The sequence spans 363 residues: 3-isopropylmalate dehydrogenase (363 aa).

78–91 (GKKWDYLPIESRPE) contributes to the NAD(+) binding site. Substrate is bound by residues arginine 99, arginine 109, arginine 138, and aspartate 227. 3 residues coordinate Mg(2+): aspartate 227, aspartate 251, and aspartate 255. 285 to 297 (GSAPDIEGKNIAN) is an NAD(+) binding site.

This sequence belongs to the isocitrate and isopropylmalate dehydrogenases family. LeuB type 1 subfamily. In terms of assembly, homodimer. It depends on Mg(2+) as a cofactor. The cofactor is Mn(2+).

It is found in the cytoplasm. It catalyses the reaction (2R,3S)-3-isopropylmalate + NAD(+) = 4-methyl-2-oxopentanoate + CO2 + NADH. The protein operates within amino-acid biosynthesis; L-leucine biosynthesis; L-leucine from 3-methyl-2-oxobutanoate: step 3/4. Functionally, catalyzes the oxidation of 3-carboxy-2-hydroxy-4-methylpentanoate (3-isopropylmalate) to 3-carboxy-4-methyl-2-oxopentanoate. The product decarboxylates to 4-methyl-2 oxopentanoate. The sequence is that of 3-isopropylmalate dehydrogenase from Buchnera aphidicola subsp. Schizaphis graminum (strain Sg).